An 89-amino-acid polypeptide reads, in one-letter code: OMEGA-ectatommitoxin(02)-Rm1a (89 aa).

The signal sequence occupies residues 1-30 (MKDSYISIVIAYLMVTFILVSSMPIEGEKG). Intrachain disulfides connect Cys-39/Cys-52, Cys-47/Cys-68, and Cys-70/Cys-79. Residues 43–80 (YANYCFNGKCVHVVAQDEPGKPCYSCICDKFYIGKRCG) enclose the EGF-like domain.

It belongs to the EGF domain peptide family. In terms of tissue distribution, expressed by the venom gland.

It is found in the secreted. In terms of biological role, ant peptide with probable defensive activity which acts as a potent agonist of the mammalian epidermal growth factor receptor (EGFR). Mimics, both structurally and functionally, vertebrate epidermal growth factor (EGF) peptide hormones. In vivo, intraplantar injection in mice causes long-lasting (several days) hypersensitivity of the injected paw to both mechanical and thermal stimuli. Its long-lasting effect is unusual for venom toxins whose effects are usually immediate. One possible explanation is that it would reduce the duration of a nest attack, discourage future attacks, or enhance the actions of subsequent exposure to other pain-inducing venom peptides. The sequence is that of OMEGA-ectatommitoxin(02)-Rm1a from Rhytidoponera metallica (Australian green-headed ant).